The following is a 100-amino-acid chain: Coiled-coil domain-containing protein 167 (100 aa).

The stretch at 14-81 forms a coiled coil; that stretch reads VASEIDRVEE…VLRGENRRNM (68 aa). Residues 82–99 traverse the membrane as a helical segment; the sequence is MLSVALLAISALFYYTFI.

The protein localises to the membrane. In Danio rerio (Zebrafish), this protein is Coiled-coil domain-containing protein 167 (ccdc167).